Consider the following 525-residue polypeptide: Ubiquitin carboxyl-terminal hydrolase 22 (525 aa).

The segment at 21 to 138 (PGCSHLGSFK…KEEQRKAWKM (118 aa)) adopts a UBP-type zinc-finger fold. Residues Cys23, His25, Cys63, Cys66, Cys76, Cys79, Cys84, His89, His93, His99, Cys112, and Cys115 each contribute to the Zn(2+) site. Lys129 carries the post-translational modification N6-acetyllysine. Thr147 is modified (phosphothreonine; by CDK1). The 345-residue stretch at 176–520 (RGLINLGNTC…EGYLLFYHKQ (345 aa)) folds into the USP domain. The Nucleophile role is filled by Cys185. Phosphoserine; by CDK1 is present on Ser237. The active-site Proton acceptor is His479.

It belongs to the peptidase C19 family. UBP8 subfamily. In terms of assembly, component of some SAGA transcription coactivator-HAT complexes, at least composed of ATXN7, ATXN7L3, ENY2, GCN5L2, SUPT3H, TAF10, TRRAP and USP22. Within the SAGA complex, ATXN7L3, ENY2 and USP22 form a subcomplex required for histone deubiquitination. Interacts directly with ATXN7L3; leading to its recruitment to the SAGA complex. Interacts with ATXN7L3 and weakly with ATXN7L3B. Interacts with MED1. In terms of processing, phosphorylated in G2/M phase, but not in G1 phase by CDK1. Ubiquitinated and subsequently degraded in a CDC20-dependent manner. As to expression, moderately expressed in various tissues including heart and skeletal muscle, and weakly expressed in lung and liver.

It localises to the nucleus. The protein localises to the cytoplasm. The enzyme catalyses Thiol-dependent hydrolysis of ester, thioester, amide, peptide and isopeptide bonds formed by the C-terminal Gly of ubiquitin (a 76-residue protein attached to proteins as an intracellular targeting signal).. Deubiquitinase that plays a role in several cellular processes including transcriptional regulation, cell cycle progression or innate immunity. As part of the transcription regulatory histone acetylation (HAT) complex SAGA, catalyzes the deubiquitination of both histones H2A and H2B, thereby acting as a transcriptional coactivator. Recruited to specific gene promoters by activators such as MYC, where it is required for transcription. Facilitates cell-cycle progression by stabilizing CCNB1 and antagonizing its proteasome-mediated degradation in a cell cycle-specific manner. Modulates cell cycle progression and apoptosis also by antagonizing TP53 transcriptional activation through deacetylase SIRT1 stabilization. Plays multiple roles in immunity and inflammation. Participates in antiviral response by deubiquitinating the importin KPNA2, leading to IRF3 nuclear translocation and subsequent type I interferon production. Acts as a central regulator of type III IFN signaling by negatively regulating STING1 activation and ubiquitination. Inhibits NLRP3 inflammasome activation by promoting NLRP3 degradation through ATG5-dependent autophagy. Deubiquitinates CD274 to induce its stabilization and thereby participates in maintenance of immune tolerance to self. Controls necroptotic cell death by regulating RIPK3 phosphorylation and ubiquitination. During bacterial infection, promotes pro-inflammatory response by targeting TRAF6 and removing its 'Lys-48'-linked polyubiquitination. This chain is Ubiquitin carboxyl-terminal hydrolase 22 (USP22), found in Homo sapiens (Human).